The sequence spans 444 residues: Probable glycine dehydrogenase (decarboxylating) subunit 1 (444 aa).

This sequence belongs to the GcvP family. N-terminal subunit subfamily. The glycine cleavage system is composed of four proteins: P, T, L and H. In this organism, the P 'protein' is a heterodimer of two subunits.

It catalyses the reaction N(6)-[(R)-lipoyl]-L-lysyl-[glycine-cleavage complex H protein] + glycine + H(+) = N(6)-[(R)-S(8)-aminomethyldihydrolipoyl]-L-lysyl-[glycine-cleavage complex H protein] + CO2. The glycine cleavage system catalyzes the degradation of glycine. The P protein binds the alpha-amino group of glycine through its pyridoxal phosphate cofactor; CO(2) is released and the remaining methylamine moiety is then transferred to the lipoamide cofactor of the H protein. In Carboxydothermus hydrogenoformans (strain ATCC BAA-161 / DSM 6008 / Z-2901), this protein is Probable glycine dehydrogenase (decarboxylating) subunit 1.